Reading from the N-terminus, the 90-residue chain is Large ribosomal subunit protein bL27 (90 aa).

A disordered region spans residues 1-21; it reads MAHTKAGGTTRNSRDSAGRRL.

It belongs to the bacterial ribosomal protein bL27 family.

This Metamycoplasma arthritidis (strain 158L3-1) (Mycoplasma arthritidis) protein is Large ribosomal subunit protein bL27.